Here is a 397-residue protein sequence, read N- to C-terminus: Geranylgeranyl pyrophosphate synthase AN1592 (397 aa).

A disordered region spans residues 1 to 67 (MSPPLDSALE…SHDSSASSNI (67 aa)). Residues 13–42 (SEYKETAFPRTEKDPSQYKEHDLVTPEKEI) show a composition bias toward basic and acidic residues. The segment covering 52–67 (SHSSHGSHDSSASSNI) has biased composition (low complexity). K120, R123, and H152 together coordinate isopentenyl diphosphate. Mg(2+) contacts are provided by D159 and D163. Residue R168 coordinates dimethylallyl diphosphate. R169 contacts isopentenyl diphosphate. K247, T248, and Q281 together coordinate dimethylallyl diphosphate. D284 is a binding site for Mg(2+). N288, K298, and K308 together coordinate dimethylallyl diphosphate.

This sequence belongs to the FPP/GGPP synthase family. Mg(2+) is required as a cofactor.

The enzyme catalyses isopentenyl diphosphate + dimethylallyl diphosphate = (2E)-geranyl diphosphate + diphosphate. It catalyses the reaction isopentenyl diphosphate + (2E)-geranyl diphosphate = (2E,6E)-farnesyl diphosphate + diphosphate. The catalysed reaction is isopentenyl diphosphate + (2E,6E)-farnesyl diphosphate = (2E,6E,10E)-geranylgeranyl diphosphate + diphosphate. It participates in secondary metabolite biosynthesis; terpenoid biosynthesis. In terms of biological role, geranylgeranyl pyrophosphate synthase; part of the gene cluster that mediates the biosynthesis of the diterpene ent-pimara-8(14),15-diene (PD). Within the cluster, the HMG-CoA reductase AN1593 functions in the mevalonate pathway, which produces isoprenoid precursors. The geranylgeranyl pyrophosphate (GGPP) synthase AN1592 is needed in the formation of GGPP, the precursor for diterpenes. Lastly, the pimaradiene synthase pbcA performs the 2 cyclization steps that convert GGPP to ent-pimara-8(14),15-diene. The putative roles of the remaining cluster enzymes in ent-pimara-8(14),15-diene biosynthesis is unclear. The cytochrome P450 monooxygenase AN1598, the glutathione S-transferase AN1595, the oxidoreductases AN1596 and AN1597 probably function as decorative enzymes. It is possible that in biological conditions the compound is oxidized to ent-pimara-8(14),15-dien-19-oic acid, which is a bioactive diterpene compound predominant in many plant extracts. This Emericella nidulans (strain FGSC A4 / ATCC 38163 / CBS 112.46 / NRRL 194 / M139) (Aspergillus nidulans) protein is Geranylgeranyl pyrophosphate synthase AN1592.